We begin with the raw amino-acid sequence, 78 residues long: MSRVCQLTGTRANNGMSVSHSHIRTKKLQQANLQQRRLWWEEENKWINIRVTTRALKTIQKKGLGKYAKSLGVDLNKL.

The segment covering 1-20 has biased composition (polar residues); that stretch reads MSRVCQLTGTRANNGMSVSH. The tract at residues 1 to 23 is disordered; sequence MSRVCQLTGTRANNGMSVSHSHI.

It belongs to the bacterial ribosomal protein bL28 family.

The polypeptide is Large ribosomal subunit protein bL28 (Prochlorococcus marinus (strain NATL2A)).